The following is an 844-amino-acid chain: DNA mismatch repair protein MutS (844 aa).

602–609 (GPNMSGKS) serves as a coordination point for ATP.

Belongs to the DNA mismatch repair MutS family.

This protein is involved in the repair of mismatches in DNA. It is possible that it carries out the mismatch recognition step. This protein has a weak ATPase activity. This Streptococcus pneumoniae (strain Hungary19A-6) protein is DNA mismatch repair protein MutS.